The sequence spans 578 residues: MIELAAIHHQPFNSDAYSYNGRTLHIKIRTKKDDAEHVAWFGAILTNTPAHMESERAYVAKIGRNKQPMITGLPKCGLHSGSAIRIYLTALMIETLFTEAMVHVRFRYRQTHVLNFRLFMRQTRLMHRLGQINRLVSNFSGAFRAGGKICSGKPLPWGRKDPEAHDFFGGHLQGIMTSWTIWKTWGEAGIYLTPIFAAPSNHKYDTLDYCSIDPHFGDEELFRTVVSRIHERGMKIMLDAVFNHIGTSQEWQDVVKNGETSRYKDWFIFILSLLKKAAMIHLRLVPRCRSSIAGTRKFRLICLILRCTGSANLISTAGVWMWQMKLIMRFGRNSGKPSPEKPDIFILGEIWHQADPWLRGDEFHIGHELPVHRTDDSLFFRRIDFSSQIASRINSQKMSGMKQVKEVMLNLLDSHERILTRCGGDQRKGARLFWHSCLLRQGRIYYPRKSGFTAAMIHCAGSAWFGKRKNRIKRCLAFMKPLIALRKQENDVLTYGALEWKLVDDQNDFVSFSRTHEGKELIYFFHQGREVRRVRLRDLKIASDKRIYDAWTEEALHDDDVVDIQPGDFSFLGRSKFC.

It belongs to the glycosyl hydrolase 13 family.

It carries out the reaction hydrolysis of (1-&gt;4)-alpha-D-glucosidic linkages in polysaccharides so as to remove successive alpha-maltose residues from the non-reducing ends of the chains.. Functionally, converts starch into maltose. In contrary to other maltogenic alpha-amylases BlmA cannot hydrolyze 1,4-alpha-glucosidic linkage next to 1,6-alpha-glucosidic linkages. This Bacillus licheniformis protein is Maltogenic alpha-amylase (blmA).